The following is a 184-amino-acid chain: ATP synthase subunit delta (184 aa).

It belongs to the ATPase delta chain family. F-type ATPases have 2 components, F(1) - the catalytic core - and F(0) - the membrane proton channel. F(1) has five subunits: alpha(3), beta(3), gamma(1), delta(1), epsilon(1). F(0) has three main subunits: a(1), b(2) and c(10-14). The alpha and beta chains form an alternating ring which encloses part of the gamma chain. F(1) is attached to F(0) by a central stalk formed by the gamma and epsilon chains, while a peripheral stalk is formed by the delta and b chains.

It localises to the cell inner membrane. F(1)F(0) ATP synthase produces ATP from ADP in the presence of a proton or sodium gradient. F-type ATPases consist of two structural domains, F(1) containing the extramembraneous catalytic core and F(0) containing the membrane proton channel, linked together by a central stalk and a peripheral stalk. During catalysis, ATP synthesis in the catalytic domain of F(1) is coupled via a rotary mechanism of the central stalk subunits to proton translocation. In terms of biological role, this protein is part of the stalk that links CF(0) to CF(1). It either transmits conformational changes from CF(0) to CF(1) or is implicated in proton conduction. In Rickettsia felis (strain ATCC VR-1525 / URRWXCal2) (Rickettsia azadi), this protein is ATP synthase subunit delta.